The primary structure comprises 500 residues: Probable cytosol aminopeptidase (500 aa).

Residues lysine 265 and aspartate 270 each coordinate Mn(2+). Lysine 277 is an active-site residue. Aspartate 288, aspartate 347, and glutamate 349 together coordinate Mn(2+). Residue arginine 351 is part of the active site.

The protein belongs to the peptidase M17 family. It depends on Mn(2+) as a cofactor.

It localises to the cytoplasm. The enzyme catalyses Release of an N-terminal amino acid, Xaa-|-Yaa-, in which Xaa is preferably Leu, but may be other amino acids including Pro although not Arg or Lys, and Yaa may be Pro. Amino acid amides and methyl esters are also readily hydrolyzed, but rates on arylamides are exceedingly low.. The catalysed reaction is Release of an N-terminal amino acid, preferentially leucine, but not glutamic or aspartic acids.. Presumably involved in the processing and regular turnover of intracellular proteins. Catalyzes the removal of unsubstituted N-terminal amino acids from various peptides. This Bdellovibrio bacteriovorus (strain ATCC 15356 / DSM 50701 / NCIMB 9529 / HD100) protein is Probable cytosol aminopeptidase.